The sequence spans 704 residues: Zinc finger protein MSN2 (704 aa).

Positions 84–246 (PSTTDNSLHL…SISNSNSNST (163 aa)) are disordered. Basic and acidic residues predominate over residues 91 to 112 (LHLKADSNKNRDARTIENDSEI). The segment covering 113 to 133 (KSTNNASGSGANQYTTLTSPY) has biased composition (polar residues). The segment covering 141-166 (NMNNPLQSPSPSSVPQNPTINPPINT) has biased composition (low complexity). Composition is skewed to polar residues over residues 167–193 (ASNETNLSPQTSNGNETLISPRAQQHT) and 204–220 (NGANSNLFIDTNPNNLN). Positions 228–246 (NSDTNSYSNSISNSNSNST) are enriched in low complexity. The 9aaTAD motif lies at 261-269 (SMLDDYVSS). 2 positions are modified to phosphoserine: Ser288 and Ser304. Residues 418–437 (NRVQHKQLTSSHNNSSTNMK) form a disordered region. Residues 426-437 (TSSHNNSSTNMK) show a composition bias toward polar residues. Residues Ser451 and Ser582 each carry the phosphoserine modification. The tract at residues 592-634 (LTNQQNNISSSSVNSTGNGAGVTKERRPSYRRKSMTPSRRSSV) is disordered. Residues 593–608 (TNQQNNISSSSVNSTG) show a composition bias toward low complexity. Ser633 carries the phosphoserine modification. 2 C2H2-type zinc fingers span residues 647-665 (FHCHICPKSFKRSEHLKRH) and 676-698 (FACHICDKKFSRSDNLSQHIKTH).

As to quaternary structure, interacts with WHI2.

The protein resides in the cytoplasm. The protein localises to the nucleus. In terms of biological role, positive transcriptional factor that acts as a component of the stress responsive system. Recognizes and binds to the stress response element (STRE) which is involved in the response to various forms of stress (heat, oxidative, osmotic, etc.). Involved in the regulation of the CTT1, DDR2, HSP12 genes. May be regulated via WHI2-PSR1 complex phosphatase activity. In Saccharomyces cerevisiae (strain ATCC 204508 / S288c) (Baker's yeast), this protein is Zinc finger protein MSN2 (MSN2).